The chain runs to 385 residues: uncharacterized protein (385 aa).

The next 8 helical transmembrane spans lie at 17 to 37 (ILII…FIFT), 72 to 92 (TELM…WFLL), 107 to 127 (WILK…KCIT), 155 to 175 (ICLI…FYII), 191 to 211 (WIQA…LVLL), 295 to 315 (AFPS…FYFL), 326 to 346 (ITLL…IVVN), and 354 to 374 (ITFT…FNSF).

It is found in the membrane. This is an uncharacterized protein from Mycoplasma capricolum subsp. capricolum (strain California kid / ATCC 27343 / NCTC 10154).